The following is a 1044-amino-acid chain: MFKKVESKVNFPKIEERILKFWNDNKIFEKSIQQREGCEEFTFYDGPPFATGLPHFGHFVPNTIKDIIPRYKTMKGKQVKRYFGWDTHGLPVEYEVEKSLKISGRYEIEKYGIDKFNEECRKIVLRYTKEWQKTISRLGRWIDFENNYKTMDTTFMESVWWVFQTLYNKGLIYESYYVLPYSPKLATPLSNFEVNLGEYKEIHDPSLTIKFKIKDKNEYLLAWTTTPWTLPTNLGIAVGKDIDYSKIFDKEKDETFIIGTKRLNHYYKDEKAYTVIEQFKGEYIKGIEYEPIFNYFLNQRDKGAFKIHTAEYVTTDDGTGIVHIAPFGEEDYNILKNNTKTDMITPIDAECRFTNEVKDFEGLFVKDADNKIIEKLKSMNLLFKRENFLHRYPFCYRTNSPLIYRPISSWFVNIEAIKEKLIKSNEQINWMPSHLKKGRFGKWLENARDWAISRNRFWGNPIPVWICSKTGNKICIGSKEELERLSGQKVNDLHKDKVDKITWPSEYGGVYVRTSEVLDCWFESGSMPYASKHYPFKDKDNFHNIFPADFIAEGLDQTRGWFYTLTILGTALFENTAFKNVIVNGLVLSSDGRKMSKSLRNYTDPMEVINTFGADALRLYLVMSPVIRADDLKYSDDGVKDVLKNIIIPIWNAYSFFITYAIIDKFEPNNNINLHKTNILDKWIVSEIESLKKILNEEIDKYNLTKSIEELLAFIDKLNNWYIRRSRRRFWKSENDNDKIDAHETLYYVIKNLMLMLAPFIPFLTEEIYQNLKTKDEKESIHLNKYPQAIEKLINIDLEEKMNFIRKVVSIARALRASHNIKIRKPISTIYVVTKDQKEQQILNEMKEIILEEINAKEIKIKSNEEELVTYKAKANFRELGSKLGVNMKVGSLEIMKLTNEDILKIINGNKHIIKINENTYNITLKDIILERHERENLKIINEDSVTIGLDALITEELYLEGLSRELIRKVQNLRKENNFNVSDRIILYIDNSDILKKITNQFESYIKTETLTLKIEINKEKALTNVELDDAIFIKIGIKRWSN.

The 'HIGH' region signature appears at 48-58; sequence PFATGLPHFGH. A 'KMSKS' region motif is present at residues 594–598; that stretch reads KMSKS. Position 597 (Lys597) interacts with ATP.

It belongs to the class-I aminoacyl-tRNA synthetase family. IleS type 2 subfamily. In terms of assembly, monomer. It depends on Zn(2+) as a cofactor.

Its subcellular location is the cytoplasm. It carries out the reaction tRNA(Ile) + L-isoleucine + ATP = L-isoleucyl-tRNA(Ile) + AMP + diphosphate. Catalyzes the attachment of isoleucine to tRNA(Ile). As IleRS can inadvertently accommodate and process structurally similar amino acids such as valine, to avoid such errors it has two additional distinct tRNA(Ile)-dependent editing activities. One activity is designated as 'pretransfer' editing and involves the hydrolysis of activated Val-AMP. The other activity is designated 'posttransfer' editing and involves deacylation of mischarged Val-tRNA(Ile). The protein is Isoleucine--tRNA ligase of Borrelia turicatae (strain 91E135).